A 161-amino-acid chain; its full sequence is Regulator of ribonuclease activity A (161 aa).

It belongs to the RraA family. Homotrimer. Binds to both RNA-binding sites in the C-terminal region of Rne and to RhlB.

It localises to the cytoplasm. In terms of biological role, globally modulates RNA abundance by binding to RNase E (Rne) and regulating its endonucleolytic activity. Can modulate Rne action in a substrate-dependent manner by altering the composition of the degradosome. Modulates RNA-binding and helicase activities of the degradosome. The chain is Regulator of ribonuclease activity A from Shigella boydii serotype 18 (strain CDC 3083-94 / BS512).